The following is a 123-amino-acid chain: Large ribosomal subunit protein uL22c (123 aa).

Belongs to the universal ribosomal protein uL22 family. In terms of assembly, part of the 50S ribosomal subunit.

The protein resides in the plastid. It is found in the chloroplast. In terms of biological role, this protein binds specifically to 23S rRNA. The globular domain of the protein is located near the polypeptide exit tunnel on the outside of the subunit, while an extended beta-hairpin is found that lines the wall of the exit tunnel in the center of the 70S ribosome. The sequence is that of Large ribosomal subunit protein uL22c (rpl22) from Chara vulgaris (Common stonewort).